Here is a 670-residue protein sequence, read N- to C-terminus: Transketolase, plasmid (670 aa).

Histidine 32 lines the substrate pocket. Residues histidine 72 and 120–122 (GPL) contribute to the thiamine diphosphate site. Aspartate 161 contacts Mg(2+). Glycine 162 and asparagine 191 together coordinate thiamine diphosphate. 2 residues coordinate Mg(2+): asparagine 191 and isoleucine 193. 3 residues coordinate substrate: histidine 267, arginine 364, and serine 391. Histidine 267 contacts thiamine diphosphate. Glutamate 417 acts as the Proton donor in catalysis. Position 443 (phenylalanine 443) interacts with thiamine diphosphate. Positions 467, 475, and 526 each coordinate substrate.

It belongs to the transketolase family. Homodimer. Mg(2+) serves as cofactor. It depends on Ca(2+) as a cofactor. Mn(2+) is required as a cofactor. The cofactor is Co(2+). Requires thiamine diphosphate as cofactor.

It catalyses the reaction D-sedoheptulose 7-phosphate + D-glyceraldehyde 3-phosphate = aldehydo-D-ribose 5-phosphate + D-xylulose 5-phosphate. Its pathway is carbohydrate biosynthesis; Calvin cycle. Catalyzes the transfer of a two-carbon ketol group from a ketose donor to an aldose acceptor, via a covalent intermediate with the cofactor thiamine pyrophosphate. This Cupriavidus necator (strain ATCC 17699 / DSM 428 / KCTC 22496 / NCIMB 10442 / H16 / Stanier 337) (Ralstonia eutropha) protein is Transketolase, plasmid (cbbTP).